The primary structure comprises 372 residues: Mitogen-activated protein kinase kinase kinase 17 (372 aa).

The Protein kinase domain occupies 3–259 (WTRGRILGRG…ATQLLNHPFL (257 aa)). ATP is bound by residues 9 to 17 (LGRGSTATV) and lysine 32. Aspartate 126 acts as the Proton acceptor in catalysis. Position 312 is a phosphoserine (serine 312).

It belongs to the protein kinase superfamily. Ser/Thr protein kinase family. As to quaternary structure, binds to MKK3.

The protein localises to the nucleus. It catalyses the reaction L-seryl-[protein] + ATP = O-phospho-L-seryl-[protein] + ADP + H(+). It carries out the reaction L-threonyl-[protein] + ATP = O-phospho-L-threonyl-[protein] + ADP + H(+). Its function is as follows. Component of the abscisic acid (ABA) signaling pathway that may act as ABA signal transducer in the context of abiotic stresses. Triggers MPK7 activation in a MKK3-dependent manner. Mediates the ABA-dependent activation of the MKK3-MPK7 module. This Arabidopsis thaliana (Mouse-ear cress) protein is Mitogen-activated protein kinase kinase kinase 17.